The primary structure comprises 385 residues: Leucine aminopeptidase 1 (385 aa).

The signal sequence occupies residues 1 to 20 (MKFPSLLSLGVAASTTIVAA). Positions 21–87 (VPDQKPIGDI…FPKTFAQTTV (67 aa)) are excised as a propeptide. Residue Asn177 is glycosylated (N-linked (GlcNAc...) asparagine). His185, Asp204, Glu243, and Asp270 together coordinate Zn(2+). Residues Cys319 and Cys323 are joined by a disulfide bond. His352 is a binding site for Zn(2+).

This sequence belongs to the peptidase M28 family. M28E subfamily. As to quaternary structure, monomer. It depends on Zn(2+) as a cofactor.

The protein resides in the secreted. Its function is as follows. Extracellular aminopeptidase that allows assimilation of proteinaceous substrates. This is Leucine aminopeptidase 1 (LAP1) from Ajellomyces capsulatus (strain G186AR / H82 / ATCC MYA-2454 / RMSCC 2432) (Darling's disease fungus).